A 181-amino-acid polypeptide reads, in one-letter code: MNIAIFGGSFDPPHNAHDAIVKAALLNLKIDKLIIIPTYLNPFKTEFGADPKKRLVWCEALWQNLDKVEISKFEIEQNRAVPSLESVLHFKKIYNPDIVYLIIGADQLINLEKWYKFKVLKKLVNFVVASRDDIEIPSNLQKLNINVKISSTKVRNELDFCQVPKAVLEDVIKFYKEKNAR.

The protein belongs to the NadD family.

It catalyses the reaction nicotinate beta-D-ribonucleotide + ATP + H(+) = deamido-NAD(+) + diphosphate. It functions in the pathway cofactor biosynthesis; NAD(+) biosynthesis; deamido-NAD(+) from nicotinate D-ribonucleotide: step 1/1. Its function is as follows. Catalyzes the reversible adenylation of nicotinate mononucleotide (NaMN) to nicotinic acid adenine dinucleotide (NaAD). This is Probable nicotinate-nucleotide adenylyltransferase from Campylobacter fetus subsp. fetus (strain 82-40).